The sequence spans 332 residues: DNA repair and recombination protein RadA (332 aa).

Position 126 to 133 (126 to 133 (GEFGSGKT)) interacts with ATP.

The protein belongs to the eukaryotic RecA-like protein family.

Its function is as follows. Involved in DNA repair and in homologous recombination. Binds and assemble on single-stranded DNA to form a nucleoprotein filament. Hydrolyzes ATP in a ssDNA-dependent manner and promotes DNA strand exchange between homologous DNA molecules. This Pyrobaculum calidifontis (strain DSM 21063 / JCM 11548 / VA1) protein is DNA repair and recombination protein RadA.